The primary structure comprises 818 residues: Glycerol-3-phosphate acyltransferase (818 aa).

The HXXXXD motif signature appears at 305–310; the sequence is CHRSHM.

The protein belongs to the GPAT/DAPAT family.

It localises to the cell inner membrane. The enzyme catalyses sn-glycerol 3-phosphate + an acyl-CoA = a 1-acyl-sn-glycero-3-phosphate + CoA. It participates in phospholipid metabolism; CDP-diacylglycerol biosynthesis; CDP-diacylglycerol from sn-glycerol 3-phosphate: step 1/3. In Edwardsiella ictaluri (strain 93-146), this protein is Glycerol-3-phosphate acyltransferase.